The following is a 612-amino-acid chain: Class E vacuolar protein-sorting machinery protein HSE1 (612 aa).

In terms of domain architecture, VHS spans 16–145; sequence ATDENLTSEN…KLKSQNPNIQ (130 aa). A UIM domain is found at 162–181; the sequence is KEEEELQMALALSIKEKQSE. Residues 176-212 are disordered; sequence KEKQSETSKQQDGSSQHVVTTSAQAEAAPSQGIPSGT. A compositionally biased stretch (polar residues) spans 182–199; that stretch reads TSKQQDGSSQHVVTTSAQ. An SH3 domain is found at 215 to 274; sequence ATVSRVRALYDFQPSEPGELQFRKGDIIAVLESVYKDWWKGSLRGQVGIFPLNYVEKLSD. The interval 372-612 is disordered; sequence PAQSHYNRPA…PTSNPAAFYR (241 aa). Polar residues-rich tracts occupy residues 413-423 and 491-508; these read RPSQDPQSAPH and LGTSVYDSPQGNAPQAIQ. 2 stretches are compositionally biased toward pro residues: residues 538-559 and 566-578; these read ENPPPQAPSSNPPYPVQTPQEP and PPAPMHQPPPIPS. A compositionally biased stretch (polar residues) spans 597–612; that stretch reads TTQQHSPTSNPAAFYR.

The protein belongs to the STAM family. In terms of assembly, component of the ESCRT-0 complex composed of HSE1 and VPS27.

It is found in the endosome membrane. Functionally, component of the ESCRT-0 complex which is the sorting receptor for ubiquitinated cargo proteins at the multivesicular body (MVB). This is Class E vacuolar protein-sorting machinery protein HSE1 (HSE1) from Coccidioides immitis (strain RS) (Valley fever fungus).